The chain runs to 2412 residues: Genome polyprotein 1 (2412 aa).

The disordered stretch occupies residues 1–23 (MEQTLAQAVSRRGKTNTPMAEER). In terms of domain architecture, Helicase ATP-binding spans 474–632 (AMADANNCWS…AARKYPLHVE (159 aa)). An ATP-binding site is contributed by 487–494 (GHTGSGKS). The 167-residue stretch at 647–813 (GGGDLLDISK…NVPFYMNETF (167 aa)) folds into the Helicase C-terminal domain. Residue Y1234 is modified to O-(5'-phospho-RNA)-tyrosine. Positions 1359–1574 (ISFGASTGIL…CGYSSHNALF (216 aa)) constitute a Peptidase C4 domain. Active-site for nuclear inclusion protein A activity residues include H1404, D1440, and C1507. Positions 1858–1982 (WLHGSGDGSR…AISPQFDEEF (125 aa)) constitute a RdRp catalytic domain. The disordered stretch occupies residues 2178 to 2202 (PTEDDGKLKTPSGARIPSSAADGNW).

It belongs to the bymoviruses polyprotein 1 family. In terms of processing, VPg is uridylylated by the polymerase and is covalently attached to the 5'-end of the genomic RNA. This uridylylated form acts as a nucleotide-peptide primer for the polymerase. The viral RNA1 of bymoviruses is expressed as a single polyprotein which undergoes post-translational proteolytic processing by the main proteinase NIa-pro resulting in the production of at least eight individual proteins.

The protein localises to the host cytoplasmic vesicle. The protein resides in the virion. It carries out the reaction RNA(n) + a ribonucleoside 5'-triphosphate = RNA(n+1) + diphosphate. It catalyses the reaction Hydrolyzes glutaminyl bonds, and activity is further restricted by preferences for the amino acids in P6 - P1' that vary with the species of potyvirus, e.g. Glu-Xaa-Xaa-Tyr-Xaa-Gln-|-(Ser or Gly) for the enzyme from tobacco etch virus. The natural substrate is the viral polyprotein, but other proteins and oligopeptides containing the appropriate consensus sequence are also cleaved.. In terms of biological role, indispensable for virus replication. Mediates the cap-independent, EIF4E-dependent translation of viral genomic RNAs. Binds to the cap-binding site of host EIF4E and thus interferes with the host EIF4E-dependent mRNA export and translation. VPg-RNA directly binds EIF4E and is a template for transcription. Also forms trimeric complexes with EIF4E-EIF4G, which are templates for translation. Its function is as follows. Has RNA-binding and proteolytic activities. Functionally, an RNA-dependent RNA polymerase that plays an essential role in the virus replication. The protein is Genome polyprotein 1 of Hordeum vulgare (Barley).